The primary structure comprises 499 residues: MATSVLANWHGHDYQARYFWIEASRLKNPQQDFVVEVSYEADGPKAFDDVITRYNPPRRSTGPDRIQADYYQIKFHVTQAASFGFEDLIDPAFIGAETFSILERLKQAKGTEPANSAFHLVTTDRIIDEDPLGEIISNVDGSIRLDKLFDGTTDRSRKGKVRKLWRQHLKLSTDQELEQVLSGFHIQQSQPTLEAMREKVNTCFQIIGLITCETSSDFRFDGAARALRSQERYRFTREQFTALCEEENWIRSEAPESFRNVALRSFSDGPLDIMDALPEHTLSLLSLFEGRFPSPGIEWNDVIKPQVETFLTGIRQTERKVRLYLNTHSSIAMLAGKCLGHKSGVEIELVQKGRMGDSIWSENESQDEPDAVIETETVGTGSDVAVVLSITRNALPKARAYILENQPDIGRIIHVTPANGHGQRSVKNGSHAVAIAEQVSDVVMDADLPVEASLHIFSAAPNAVNFYLGQHTDFLGTCVFYEFDFQRQRDGSYLPSFKV.

Residues 1-226 (MATSVLANWH…DFRFDGAARA (226 aa)) are N-terminal endonuclease domain. Active-site residues include Asp-49 and Gln-72. Asp-49 is a Mg(2+) binding site. Residue Ile-73 participates in Mg(2+) binding. Lys-74 is an active-site residue. The segment at 258-464 (FRNVALRSFS…HIFSAAPNAV (207 aa)) is C-terminal SAVED domain.

This sequence belongs to the Cap4 nuclease family. As to quaternary structure, a monomer in the absence of ligand, in its presence it forms oligomers. Mg(2+) serves as cofactor.

DNase activity is activated upon ligand binding (cAAG). Inhibited by EDTA. In terms of biological role, effector DNase of a CBASS antivirus system. CBASS (cyclic oligonucleotide-based antiphage signaling system) provides immunity against bacteriophages. The CD-NTase protein (CdnD) synthesizes cyclic nucleotides in response to infection; these serve as specific second messenger signals. The signals activate a diverse range of effectors, leading to bacterial cell death and thus abortive phage infection. A type II-C(AAG) CBASS system. Its function is as follows. Binds second messenger 3',3',3'-cyclic AMP-AMP-GMP (cAAG). In the presence of cAAG (synthesized by the cognate CD-NTase protein in the CBASS operon), endonucleolytically degrades dsDNA to approximately 17 bp length fragments, with a preference for 5'-C|NG sites. Only binds DNA in the presence of cAAG. Not activated by c-di-AMP, c-di-GMP, 3',3'-cyclic GMP-AMP (cGAMP) or the second messenger of A.baumanii strain ATCC 27244. Protects E.coli against phage T2 infection. When the cdnD-cap2-cap3-cap4 operon is introduced in E.coli there is a more than 10(3) decrease in the efficiency of T2 plaque formation. The operon does not protect against phage T5 and only about 10-fold against T7. Expression of cdnD-cap4 alone protects E.coli against phage T2 infection. The polypeptide is CD-NTase-associated protein 4 (Enterobacter hormaechei subsp. hoffmannii (strain UCI 50)).